A 544-amino-acid polypeptide reads, in one-letter code: Glycoprotein gp100 (544 aa).

Residues 1-19 (MKNFILLVFLFLLVSNSLG) form the signal peptide. At 20 to 489 (KSNKKDDQSP…SGGGGNKKLY (470 aa)) the chain is on the extracellular side. An N-linked (GlcNAc...) asparagine glycan is attached at Asn-80. Residues 84–99 (EPQNNPIPTVSINPDQ) show a composition bias toward polar residues. The interval 84-215 (EPQNNPIPTV…TPTRPSSSVS (132 aa)) is disordered. Low complexity-rich tracts occupy residues 126 to 142 (SKPTSTPTSTPSQTIPP), 150 to 165 (PQTTSPTSKPTSTPTP), and 189 to 199 (PKPTKSSKPTK). 8 N-linked (GlcNAc...) asparagine glycosylation sites follow: Asn-224, Asn-308, Asn-332, Asn-366, Asn-380, Asn-410, Asn-422, and Asn-478. A disordered region spans residues 444–480 (KPSTTDDDNNKNNDDGDSEIDSVGKSAVDSSKSNNNS). A helical membrane pass occupies residues 490-510 (LLIILPTVLFIIVAALVAIFI). The Cytoplasmic segment spans residues 511 to 544 (KTRVSQNSGSKVNKNNNKKDSINVPFQMLDEITT).

In terms of processing, N- and O-glycosylated.

Its subcellular location is the membrane. The chain is Glycoprotein gp100 (gppA) from Dictyostelium discoideum (Social amoeba).